A 358-amino-acid chain; its full sequence is Methylthioribose-1-phosphate isomerase (358 aa).

M1 bears the N-acetylmethionine mark. Residue D248 is the Proton donor of the active site.

It belongs to the eIF-2B alpha/beta/delta subunits family. MtnA subfamily.

The protein localises to the cytoplasm. It is found in the nucleus. It carries out the reaction 5-(methylsulfanyl)-alpha-D-ribose 1-phosphate = 5-(methylsulfanyl)-D-ribulose 1-phosphate. Its pathway is amino-acid biosynthesis; L-methionine biosynthesis via salvage pathway; L-methionine from S-methyl-5-thio-alpha-D-ribose 1-phosphate: step 1/6. Catalyzes the interconversion of methylthioribose-1-phosphate (MTR-1-P) into methylthioribulose-1-phosphate (MTRu-1-P). The polypeptide is Methylthioribose-1-phosphate isomerase (Bos taurus (Bovine)).